Consider the following 614-residue polypeptide: Vitamin B12 transporter BtuB (614 aa).

A signal peptide spans 1 to 20; the sequence is MIKKASLLTACSVTAFSAWA. Positions 26-33 match the TonB box motif; the sequence is DTLVVTAN. Residues 38-152 form the TBDR plug domain; sequence PRSTVLAPTT…IGGVVNIITT (115 aa). Cyanocob(III)alamin-binding positions include Leu-83, Ser-85, Asn-92, and 110–111; that span reads VS. A TBDR beta-barrel domain is found at 155–614; it reads EPGTEISAGW…EYTLSGSYTF (460 aa). 3 beta stranded membrane passes run 158-165, 169-178, and 184-195; these read TEISAGWG, YQNYDVSTQQ, and TRVTLLGDYAHT. Asp-199, Gln-211, Asp-213, and Asp-215 together coordinate Ca(2+). Transmembrane regions (beta stranded) follow at residues 217 to 227 and 232 to 248; these read FLSKTLYGALE and DAWS…NRTN. Ca(2+)-binding residues include Tyr-249 and Asp-250. A cyanocob(III)alamin-binding site is contributed by Ala-251. Residue Asp-261 participates in Ca(2+) binding. The next 14 beta stranded transmembrane spans lie at 263-277, 279-296, 309-325, 328-337, 353-369, 371-381, 385-400, 403-417, 434-443, 449-458, 473-490, 494-509, 517-529, and 535-550; these read RKLY…LRYN, ELIK…KDYN, TLDE…NNVI, HGSIGAGVDW, YDQR…QQVG, FTFEGAARSDD, FGRH…WEFI, YRFI…KAPN, KSKQWEGAFE, VNWRISGYRN, YYNE…TANF, PLTH…ARNA, RRAK…QLDW, and DWGI…YDKD. Thr-309 is a cyanocob(III)alamin binding site. Cyanocob(III)alamin is bound at residue Arg-517. Tyr-551 contributes to the cyanocob(III)alamin binding site. Beta stranded transmembrane passes span 558 to 572, 585 to 596, and 602 to 614; these read TVKM…LAVA, IANLFDKDYETV, and AGRE…SYTF. A TonB C-terminal box motif is present at residues 597–614; sequence YGYQTAGREYTLSGSYTF.

Belongs to the TonB-dependent receptor family. BtuB (TC 1.B.14.3.1) subfamily.

It is found in the cell outer membrane. Functionally, involved in the active translocation of vitamin B12 (cyanocobalamin) across the outer membrane to the periplasmic space. It derives its energy for transport by interacting with the trans-periplasmic membrane protein TonB. This chain is Vitamin B12 transporter BtuB, found in Escherichia coli O9:H4 (strain HS).